A 448-amino-acid chain; its full sequence is C4-dicarboxylate transport protein 2 (448 aa).

A run of 9 helical transmembrane segments spans residues 13–33 (SLYVQVLAAVTIGVLLGHFSP), 49–69 (LIKMIIAPIIFCTVVIGIAGM), 81–101 (LALLYFEVMSTLALVIGLIVV), 149–169 (AFAKGEILQVLLFSVLFGFAL), 193–213 (IVGIIMKVAPIGAFGAMAFTI), 227–247 (LMGAFYLTCLIFVFVVLGIVS), 294–314 (VVGLVIPTGYSFNLDGTSIYL), 335–355 (ITLLAVLMLTSKGAAGITGSG), and 357–377 (IVLAATLSAVGGVPVAGLALI).

It belongs to the dicarboxylate/amino acid:cation symporter (DAACS) (TC 2.A.23) family.

The protein resides in the cell inner membrane. Responsible for the transport of dicarboxylates such as succinate, fumarate, and malate from the periplasm across the membrane. This chain is C4-dicarboxylate transport protein 2, found in Polaromonas naphthalenivorans (strain CJ2).